Reading from the N-terminus, the 605-residue chain is Alanine--tRNA ligase (605 aa).

Residues histidine 463, histidine 467, cysteine 565, and histidine 569 each contribute to the Zn(2+) site.

This sequence belongs to the class-II aminoacyl-tRNA synthetase family. Requires Zn(2+) as cofactor.

It localises to the cytoplasm. It catalyses the reaction tRNA(Ala) + L-alanine + ATP = L-alanyl-tRNA(Ala) + AMP + diphosphate. Functionally, catalyzes the attachment of alanine to tRNA(Ala) in a two-step reaction: alanine is first activated by ATP to form Ala-AMP and then transferred to the acceptor end of tRNA(Ala). Also edits incorrectly charged Ser-tRNA(Ala) and Gly-tRNA(Ala) via its editing domain. The chain is Alanine--tRNA ligase (alaS) from Treponema pallidum (strain Nichols).